Reading from the N-terminus, the 148-residue chain is Deoxyuridine 5'-triphosphate nucleotidohydrolase (148 aa).

Residues 65-67 (RSG), asparagine 78, 82-84 (TID), and lysine 92 each bind substrate.

The protein belongs to the dUTPase family. Mg(2+) serves as cofactor.

The enzyme catalyses dUTP + H2O = dUMP + diphosphate + H(+). The protein operates within pyrimidine metabolism; dUMP biosynthesis; dUMP from dCTP (dUTP route): step 2/2. Its function is as follows. This enzyme is involved in nucleotide metabolism: it produces dUMP, the immediate precursor of thymidine nucleotides and it decreases the intracellular concentration of dUTP so that uracil cannot be incorporated into DNA. In Chlorobium phaeovibrioides (strain DSM 265 / 1930) (Prosthecochloris vibrioformis (strain DSM 265)), this protein is Deoxyuridine 5'-triphosphate nucleotidohydrolase.